We begin with the raw amino-acid sequence, 359 residues long: Alanine racemase (359 aa).

Lys-34 acts as the Proton acceptor; specific for D-alanine in catalysis. Lys-34 carries the post-translational modification N6-(pyridoxal phosphate)lysine. Arg-129 is a binding site for substrate. Catalysis depends on Tyr-255, which acts as the Proton acceptor; specific for L-alanine. Met-303 contacts substrate.

It belongs to the alanine racemase family. The cofactor is pyridoxal 5'-phosphate.

The catalysed reaction is L-alanine = D-alanine. It participates in amino-acid biosynthesis; D-alanine biosynthesis; D-alanine from L-alanine: step 1/1. In terms of biological role, catalyzes the interconversion of L-alanine and D-alanine. May also act on other amino acids. The chain is Alanine racemase (alr) from Shigella dysenteriae serotype 1 (strain Sd197).